The chain runs to 179 residues: Large ribosomal subunit protein uL6 (179 aa).

It belongs to the universal ribosomal protein uL6 family. Part of the 50S ribosomal subunit.

Functionally, this protein binds to the 23S rRNA, and is important in its secondary structure. It is located near the subunit interface in the base of the L7/L12 stalk, and near the tRNA binding site of the peptidyltransferase center. This is Large ribosomal subunit protein uL6 from Synechocystis sp. (strain ATCC 27184 / PCC 6803 / Kazusa).